Reading from the N-terminus, the 1218-residue chain is MLCFDSERMNWYYHVLARRPYLVVVSIAVYCVACIIVALVLNKLPDFSDPTLGFETRGTKIGERLTAWYNLLQETDHHGALFSNPSDLWERRRVEQGYVETKLHPNHRRRKNKHKNRNKNKRRKEQNQSSHEHHDVAQKMMQFKKRLKATSSPSPNLGFDTWIGDSGVFRDYEITNDSASSSLEPTRRTEQIEYGHNTTSVDEEEHQQRVQTKKSTWRLLKQAATLPTDGWADMHRRQPIEGFFCDSSPRKEYSHFVVQRIGPNATDSLFDLNGLLAMCQLQDQITEVPSYRAFCEPEMLTTECCRPWSLPNYAAMLANKSSCFDLTTEDVTSLHTLLLGCYEYFHDLKMDNHCNEIPHCRAPEECKRLNIVFNVLNFLTDFSFIKSNDSNVYLKYAMIFIPVAQSNRLLPLFHEWEDVELINELVEVVAMDLGLENELFNELLLTDVWLVSLGGTFVMASVWLYTGSAFITLMSCVAICFSLGLAYFFYAIVLEFEFFPYMNLLAVVVIIGIGADDVFLFLKIWHCVLTERFSNRCTLTTQSQSALPTLENSDHTESLENIMALTMRHAAASMFVTSLTTAGAFYASYSSSITAIKCFGIFAGTVVVTNYLLMITWLPASVSIMERLFATRMSCHHPMSIKLIHACKKSINRFCQMFEECITKSIMNYAYLWLLIFGALGASSAVIVFWYPGLQLPEKSHFQLFVSKHPFEVYSSLKQQFWFEKPLQAYENFKMHMHFVWGVQAVDDGDYTNPNSYGHLHYDNNFNVSSRPAQLWILDFCQSVRQQPFYKETLGMLLPNCFIENLIDYMKRRCIDDMDSTRKDRSPCCDAQFPFEPHIFEYCLPQSISNMYDTTFFRPGVAGPKFAEAPRLETEDYLGMSGNESAEYSTNGSFTPLLVKALVIEFESNVAYSTIYANIRQFYESVEHWFQMQLKTAPPELQGGWFTSDLKFYNVQDTLSHDTFVAICLAMAASLAVLLCFTVNILISIYAVLTVSLSIFNTVAVLILLGWQLNILESIAVSTAIGLAVDFSLHYGIHYRMSPVKERLAATQFVLSRIIGPTVMAATTTGLAGGIMMASNILPYIQIGVFLVVVMIVSWFYATFFLMSLLRVAGPQHGFLELKWPLWSKRSSGSSKFYERKPSQVIASEQLLTPTSSAIVELANSETHELESLNSNSLIKTISGIESAHALSSLPRDFEHSFQTMHECKYQTYPSTSN.

The chain crosses the membrane as a helical span at residues 21–41; sequence YLVVVSIAVYCVACIIVALVL. The tract at residues 99-135 is disordered; it reads VETKLHPNHRRRKNKHKNRNKNKRRKEQNQSSHEHHD. The span at 104-124 shows a compositional bias: basic residues; the sequence is HPNHRRRKNKHKNRNKNKRRK. N127, N176, N197, N264, N319, and N388 each carry an N-linked (GlcNAc...) asparagine glycan. In terms of domain architecture, SSD spans 430–624; the sequence is AMDLGLENEL…ITWLPASVSI (195 aa). 6 helical membrane passes run 443–463, 473–493, 504–524, 570–590, 598–618, and 670–690; these read LLLT…ASVW, LMSC…YAIV, LLAV…FLKI, AAAS…ASYS, CFGI…ITWL, and AYLW…IVFW. 3 N-linked (GlcNAc...) asparagine glycosylation sites follow: N767, N883, and N891. Transmembrane regions (helical) follow at residues 975 to 995, 996 to 1016, 1019 to 1039, 1058 to 1078, and 1087 to 1107; these read LAVL…VLTV, SLSI…LNIL, IAVS…GIHY, IIGP…IMMA, and IGVF…FFLM.

It belongs to the dispatched family.

The protein localises to the membrane. Segment polarity protein which functions in hedgehog (Hh) signaling. Regulates the trafficking and the release of cholesterol-modified hedgehog protein from cells of the posterior compartment (P cells) and is hence required for the effective production of the Hh signal. The polypeptide is Protein dispatched (disp) (Drosophila melanogaster (Fruit fly)).